The chain runs to 187 residues: Calmodulin-like protein 1 (187 aa).

Alanine 2 is modified (N-acetylalanine). EF-hand domains lie at 8–43 (EQIG…LGQN), 44–79 (PTEA…KLRD), 81–116 (DSEE…IGER), and 117–152 (LTDE…KKRR). Residues aspartate 21, aspartate 23, aspartate 25, serine 27, glutamate 32, aspartate 57, aspartate 59, asparagine 61, asparagine 63, glutamate 68, aspartate 94, aspartate 96, asparagine 98, glutamate 105, aspartate 130, aspartate 132, aspartate 134, glutamine 136, and glutamate 141 each coordinate Ca(2+). The interval 153–187 (KRIEEKRDHDGGSRTKSAGPSAAPASKRGQKCVIL) is disordered. A compositionally biased stretch (basic and acidic residues) spans 154 to 165 (RIEEKRDHDGGS). Over residues 169 to 178 (SAGPSAAPAS) the composition is skewed to low complexity. A Cysteine methyl ester modification is found at cysteine 184. The S-farnesyl cysteine moiety is linked to residue cysteine 184. A propeptide spans 185–187 (VIL) (removed in mature form).

It belongs to the calmodulin family.

The protein resides in the membrane. Its function is as follows. Calcium-binding protein that binds and activates CAMK1, a calcium/calmodulin-dependent kinase. The protein is Calmodulin-like protein 1 (CML1) of Oryza sativa subsp. japonica (Rice).